Consider the following 195-residue polypeptide: Protein lin-28 homolog A (195 aa).

The 74-residue stretch at 33–106 (QGSGVCKWFN…GLESTQVTGP (74 aa)) folds into the CSD domain. Residues 98–127 (LESTQVTGPGGAPCIGSERRPKVKGQQKRR) form a disordered region. Residues 107-130 (GGAPCIGSERRPKVKGQQKRRQRG) form a flexible linker region. A compositionally biased stretch (basic residues) spans 118–127 (PKVKGQQKRR). 2 CCHC-type zinc fingers span residues 131–148 (DRCYNCGGLDHHAKECKL) and 153–170 (KKCHFCQNPNHMVAQCPE). Cysteine 133, cysteine 136, histidine 141, cysteine 146, cysteine 155, cysteine 158, histidine 163, and cysteine 168 together coordinate Zn(2+).

This sequence belongs to the lin-28 family. Monomer.

It localises to the cytoplasm. The protein localises to the rough endoplasmic reticulum. It is found in the P-body. The protein resides in the stress granule. Its subcellular location is the nucleus. It localises to the nucleolus. Its function is as follows. RNA-binding protein that inhibits processing of pre-let-7 miRNAs and regulates translation of mRNAs that control developmental timing, pluripotency and metabolism. Seems to recognize a common structural G-quartet (G4) feature in its miRNA and mRNA targets. 'Translational enhancer' that drives specific mRNAs to polysomes and increases the efficiency of protein synthesis. Its association with the translational machinery and target mRNAs results in an increased number of initiation events per molecule of mRNA and, indirectly, in mRNA stabilization. Suppressor of microRNA (miRNA) biogenesis, including that of let-7. Binds specific target miRNA precursors (pre-miRNAs), recognizing an 5'-GGAG-3' motif found in their terminal loop, and recruits uridylyltransferase. This results in the terminal uridylation of target pre-miRNAs. Uridylated pre-miRNAs fail to be processed by Dicer and undergo degradation. Localized to the periendoplasmic reticulum area, binds to a large number of spliced mRNAs and inhibits the translation of mRNAs destined for the ER, reducing the synthesis of transmembrane proteins, ER or Golgi lumen proteins, and secretory proteins. Binds to and enhances the translation of mRNAs for several metabolic enzymes, increasing glycolysis and oxidative phosphorylation. Which, with the let-7 repression may enhance tissue repair in adult tissue. The chain is Protein lin-28 homolog A (lin28a) from Xenopus laevis (African clawed frog).